The primary structure comprises 440 residues: F-box protein pof12 (440 aa).

Positions 8-54 (KNPASIFSHETLLHVLNDLSAHDLAALERVSRSWNSIVRRSSVWHNL) constitute an F-box domain.

In terms of assembly, interacts with skp1.

The protein localises to the nucleus. The polypeptide is F-box protein pof12 (pof12) (Schizosaccharomyces pombe (strain 972 / ATCC 24843) (Fission yeast)).